The primary structure comprises 985 residues: Translation initiation factor IF-2 (985 aa).

Composition is skewed to basic and acidic residues over residues 49-58 (QYGKKQEKSS), 65-89 (IQRE…RPDN), and 99-113 (VPNR…DKAK). Residues 49–401 (QYGKKQEKSS…QQSAPPPILD (353 aa)) are disordered. The span at 125–136 (SKTTTNSENEQT) shows a compositional bias: polar residues. Positions 137 to 162 (APRQGSAQQSGQGRPQANRPQGSQGR) are enriched in low complexity. 2 stretches are compositionally biased toward gly residues: residues 180-246 (PQGG…GQGR) and 288-324 (PQGG…GAGR). The segment covering 349-377 (KAPDKTKGDRRKNYEKDGKWADGQIEKNK) has biased composition (basic and acidic residues). Basic residues predominate over residues 378–391 (LFKGRNNKNKKRQH). The tr-type G domain maps to 485–654 (LRPPVVTIMG…LLVAEVHELK (170 aa)). Positions 494-501 (GHVDHGKT) are G1. A GTP-binding site is contributed by 494-501 (GHVDHGKT). The G2 stretch occupies residues 519–523 (GITQH). Residues 540–543 (DTPG) are G3. GTP-binding positions include 540-544 (DTPGH) and 594-597 (NKMD). The segment at 594–597 (NKMD) is G4. The segment at 630–632 (SAK) is G5.

This sequence belongs to the TRAFAC class translation factor GTPase superfamily. Classic translation factor GTPase family. IF-2 subfamily.

Its subcellular location is the cytoplasm. In terms of biological role, one of the essential components for the initiation of protein synthesis. Protects formylmethionyl-tRNA from spontaneous hydrolysis and promotes its binding to the 30S ribosomal subunits. Also involved in the hydrolysis of GTP during the formation of the 70S ribosomal complex. This chain is Translation initiation factor IF-2, found in Desulforamulus reducens (strain ATCC BAA-1160 / DSM 100696 / MI-1) (Desulfotomaculum reducens).